The following is a 232-amino-acid chain: Lipoprotein-releasing system ATP-binding protein LolD (232 aa).

The region spanning 11 to 231 (VYLHDIKRQY…SIEDGVIVEL (221 aa)) is the ABC transporter domain. Residue 47-54 (APSGSGKS) participates in ATP binding.

This sequence belongs to the ABC transporter superfamily. Lipoprotein translocase (TC 3.A.1.125) family. In terms of assembly, the complex is composed of two ATP-binding proteins (LolD) and two transmembrane proteins (LolC and LolE).

It localises to the cell inner membrane. In terms of biological role, part of the ABC transporter complex LolCDE involved in the translocation of mature outer membrane-directed lipoproteins, from the inner membrane to the periplasmic chaperone, LolA. Responsible for the formation of the LolA-lipoprotein complex in an ATP-dependent manner. This is Lipoprotein-releasing system ATP-binding protein LolD from Rhodopseudomonas palustris (strain BisB5).